Here is a 731-residue protein sequence, read N- to C-terminus: MALLKPFPLQHSLRCMASRFLLHSHYHTHTLSFSSISLSRPSIVLNPRVINKLRRLSDAILIRNMVSLRAFMSSSTTTEAFQENTKSKGYGSEQIQVLEGLDPVRKRPGMYIGSTGPRGLHHLVYEILDNAVDEAQAGFATKIDVVLHADNSVSIADNGRGIPTELHPVTKKSSLETVLTVLHAGGKFGGSSSGYNVSGGLHGVGLSVVNALSQALEVTIWRDGKEYQQKYSRGKPITTLICHDLPVEMRDRQGTAIRFWPDKEVFTTEMQFDYNTIAGRIRELAFLNPELTIALKKEDIDPEKIQCNEYFYAGGLVEYVKWLNADKKPLHDVLGFRKEADGITIDMALQWCSDAYSDTMLGYANSIRTIDGGTHIDGVKAALTRILNNLGKKSKTIKEKDISLSGEHVREGLTCVISVKVPNPEFEGQTKTRLGNPEVRKVVDQSVQEYLTEYLELHPDVLDSILSKSLNALKAALAAKRARELVRQKSVLKSSSLPGKLADCSATNPEEAEIFIVEGDSAGGSAKQGRDRRFQAILPLRGKILNIERKDEAAMYKNEEIQNLILGLGLGVKGEDFKKEALRYHKIIILTDADVDGAHIRTLLLTFFFRYQRALFEEGCIYVGVPPLYKVERGKQVYYCYDDAELKKVQRSFPSNASYNIQRFKGLGEMMPAQLWETTMNPETRLLKQLVVEDAAEANVVFSSLMGSRVDIRKQLIQNSASMMNLEQLDI.

One can recognise a Toprim domain in the interval 512-619 (AEIFIVEGDS…RYQRALFEEG (108 aa)). Residues glutamate 518, aspartate 592, and aspartate 594 each coordinate Mg(2+).

Belongs to the type II topoisomerase GyrB family. Made up of two chains. The A chain is responsible for DNA breakage and rejoining; the B chain catalyzes ATP hydrolysis. Requires Mg(2+) as cofactor. It depends on Mn(2+) as a cofactor. Ca(2+) serves as cofactor. Ubiquitous.

Its subcellular location is the plastid. The protein resides in the chloroplast. The protein localises to the mitochondrion. The catalysed reaction is ATP-dependent breakage, passage and rejoining of double-stranded DNA.. Functionally, seems to play a critical role in chloroplast nucleoid partitioning by regulating DNA topology. A type II topoisomerase that negatively supercoils closed circular double-stranded DNA in an ATP-dependent manner. The polypeptide is DNA gyrase subunit B, chloroplastic/mitochondrial (GYRB) (Nicotiana benthamiana).